The chain runs to 388 residues: Succinate--CoA ligase [ADP-forming] subunit beta (388 aa).

The ATP-grasp domain maps to 9–245; sequence KELLASYGLP…KSQENERELK (237 aa). ATP is bound by residues K46, 53-55, E100, Y103, and E108; that span reads GRG. Positions 200 and 214 each coordinate Mg(2+). Substrate contacts are provided by residues N265 and 322–324; that span reads GIV.

The protein belongs to the succinate/malate CoA ligase beta subunit family. As to quaternary structure, heterotetramer of two alpha and two beta subunits. Mg(2+) serves as cofactor.

The enzyme catalyses succinate + ATP + CoA = succinyl-CoA + ADP + phosphate. It carries out the reaction GTP + succinate + CoA = succinyl-CoA + GDP + phosphate. The protein operates within carbohydrate metabolism; tricarboxylic acid cycle; succinate from succinyl-CoA (ligase route): step 1/1. In terms of biological role, succinyl-CoA synthetase functions in the citric acid cycle (TCA), coupling the hydrolysis of succinyl-CoA to the synthesis of either ATP or GTP and thus represents the only step of substrate-level phosphorylation in the TCA. The beta subunit provides nucleotide specificity of the enzyme and binds the substrate succinate, while the binding sites for coenzyme A and phosphate are found in the alpha subunit. This chain is Succinate--CoA ligase [ADP-forming] subunit beta, found in Neisseria gonorrhoeae (strain ATCC 700825 / FA 1090).